The sequence spans 216 residues: FMN-dependent NADH:quinone oxidoreductase 3 (216 aa).

FMN is bound by residues Ser10 and 16–18 (SAS).

This sequence belongs to the azoreductase type 1 family. As to quaternary structure, homodimer. Requires FMN as cofactor.

It carries out the reaction 2 a quinone + NADH + H(+) = 2 a 1,4-benzosemiquinone + NAD(+). The enzyme catalyses N,N-dimethyl-1,4-phenylenediamine + anthranilate + 2 NAD(+) = 2-(4-dimethylaminophenyl)diazenylbenzoate + 2 NADH + 2 H(+). Quinone reductase that provides resistance to thiol-specific stress caused by electrophilic quinones. Its function is as follows. Also exhibits azoreductase activity. Catalyzes the reductive cleavage of the azo bond in aromatic azo compounds to the corresponding amines. In Pseudomonas fluorescens (strain ATCC BAA-477 / NRRL B-23932 / Pf-5), this protein is FMN-dependent NADH:quinone oxidoreductase 3.